The primary structure comprises 599 residues: Dachshund homolog 2 (599 aa).

Positions 69–155 are DACHbox-N; it reads RMVDMHGMKV…LITRKDFETL (87 aa). Disordered regions lie at residues 166–186, 237–280, and 370–409; these read RQMT…PKRS, LQGN…GPQH, and RIPE…MDHH. Over residues 237-262 the composition is skewed to polar residues; it reads LQGNGSQNGTESEPDDLNSNTGGSES. Residues 389 to 405 are compositionally biased toward low complexity; it reads SQTSSHTSSSVSSSPSQ. Residues 453–533 form a DACHbox-C region; the sequence is SSVETLLTNI…KTKRKLQEAL (81 aa). Residues 459–554 are a coiled coil; sequence LTNIQGLLKV…QALKQATTSD (96 aa).

This sequence belongs to the DACH/dachshund family. In terms of assembly, interacts with SIX6 and EYA2.

The protein localises to the nucleus. In terms of biological role, transcription factor that is involved in regulation of organogenesis. Seems to be a regulator for SIX1 and SIX6. Seems to act as a corepressor of SIX6 in regulating proliferation by directly repressing cyclin-dependent kinase inhibitors, including the p27Kip1 promoter. Is recruited with SIX6 to the p27Kip1 promoter in embryonal retina. SIX6 corepression also seems to involve NCOR1, TBL1, HDAC1 and HDAC3. May be involved together with PAX3, SIX1, and EYA2 in regulation of myogenesis. In the developing somite, expression of DACH2 and PAX3 is regulated by the overlying ectoderm, and DACH2 and PAX3 positively regulate each other's expression. Probably binds to DNA via its DACHbox-N domain. This chain is Dachshund homolog 2 (DACH2), found in Homo sapiens (Human).